A 684-amino-acid polypeptide reads, in one-letter code: Pseudohemocyanin-1 (684 aa).

The first 23 residues, 1-23, serve as a signal peptide directing secretion; it reads SLVVAAAAASPYSGSHDFSGFQR. A disordered region spans residues 7–32; sequence AAASPYSGSHDFSGFQRDEPDGVPTA. Residues asparagine 100, asparagine 193, asparagine 230, and asparagine 626 are each glycosylated (N-linked (GlcNAc...) asparagine).

Belongs to the tyrosinase family. Hemocyanin subfamily. Hexamer. In terms of tissue distribution, strongly expressed in ovaries. Also expressed in heart. Not detected in hepatopancreas, gills, connective tissue or muscle.

Does not function as a hemocyanin. The chain is Pseudohemocyanin-1 from Homarus americanus (American lobster).